Reading from the N-terminus, the 128-residue chain is Gastrotropin (128 aa).

Ala-2 carries the N-acetylalanine modification.

The protein belongs to the calycin superfamily. Fatty-acid binding protein (FABP) family. As to expression, expressed in ileum.

The protein localises to the cytoplasm. Its subcellular location is the membrane. In terms of biological role, binds to bile acids and is involved in enterohepatic bile acid metabolism. Required for efficient apical to basolateral transport of conjugated bile acids in ileal enterocytes. Stimulates gastric acid and pepsinogen secretion. This is Gastrotropin (FABP6) from Oryctolagus cuniculus (Rabbit).